A 71-amino-acid polypeptide reads, in one-letter code: Calcium dodecin (71 aa).

Glu-18 serves as a coordination point for Ca(2+).

It belongs to the dodecin family. In terms of assembly, homododecamer; 12 subunits assemble to form a hollow sphere with a diameter of about 75 Angstroms. Calcium ions are bound at the interface between three subunits.

Functionally, binds calcium ions. May play a role in sequestering additional small ligands. The polypeptide is Calcium dodecin (secE2) (Mycobacterium tuberculosis (strain ATCC 25618 / H37Rv)).